Consider the following 506-residue polypeptide: Zinc finger and SCAN domain containing protein 4F (506 aa).

Positions 1–24 are disordered; that stretch reads MASQQAPAKDLQTNNLEFTPTDSS. The SCAN box domain maps to 37–119; it reads SAQLNFSPSN…RFMESLTDEC (83 aa). C2H2-type zinc fingers lie at residues 395 to 417, 424 to 446, 452 to 474, and 480 to 503; these read YKCE…QRTH, LLCV…EIIH, FKCS…EMIH, and YVCS…RNYH.

Up-regulated in blastocyst outgrowths and is detectable in a mosaic fashion in ES cultures.

The protein localises to the nucleus. The protein resides in the chromosome. It localises to the telomere. Its function is as follows. Transcription factor required to regulate early development. Binds telomeres and plays a key role in genomic stability by regulating telomere elongation. Acts as an activator of spontaneous telomere sister chromatid exchange (T-SCE) and telomere elongation. This Mus musculus (Mouse) protein is Zinc finger and SCAN domain containing protein 4F (Zscan4f).